The following is a 482-amino-acid chain: Pre-glycoprotein polyprotein GP complex (482 aa).

Gly-2 carries the N-myristoyl glycine; by host lipid modification. Over 2–17 (GQFISFMQEIPIFLQE) the chain is Extracellular. Residues 18–32 (ALNIALVAVSLICIV) traverse the membrane as a helical segment. Residue Lys-33 is a topological domain, cytoplasmic. The chain crosses the membrane as a helical span at residues 34–53 (GLVNLYRCGLFQLMVFLVLA). Extracellular loops occupy residues 54-58 (GRSCS) and 59-421 (EETF…TLVD). Zn(2+) is bound at residue Cys-57. Residues Asn-83 and Asn-95 are each glycosylated (N-linked (GlcNAc...) asparagine; by host). Disulfide bonds link Cys-92/Cys-224, Cys-134/Cys-162, Cys-205/Cys-211, Cys-269/Cys-282, and Cys-353/Cys-374. 2 N-linked (GlcNAc...) asparagine; by host glycosylation sites follow: Asn-164 and Asn-176. N-linked (GlcNAc...) asparagine; by host glycosylation is found at Asn-354, Asn-362, Asn-379, and Asn-384. Residues 422–442 (ICFWSTEFFISTLFLHLIGFP) form a helical membrane-spanning segment. Residues 443–482 (THEHIRGEGCPLPHRLNSMGGCRCGKYLPLKKPTIWHRRH) lie on the Cytoplasmic side of the membrane. Positions 444, 446, 452, 456, 464, 466, and 482 each coordinate Zn(2+).

Belongs to the arenaviridae GPC protein family. In terms of assembly, homotetramer; disulfide-linked. Homotetramer. GP2 homotetramers bind through ionic interactions with GP1 homotetramers to form the GP complex together with the stable signal peptide. The GP-C polyprotein interacts with the host protease MBTPS1/SKI-1 resulting in the polyprotein processing. Specific enzymatic cleavages in vivo yield mature proteins. GP-C polyprotein is cleaved in the endoplasmic reticulum by the host protease MBTPS1. Only cleaved glycoprotein is incorporated into virions. In terms of processing, the SSP remains stably associated with the GP complex following cleavage by signal peptidase and plays crucial roles in the trafficking of GP through the secretory pathway. Post-translationally, myristoylation is necessary for GP2-mediated fusion activity.

Its subcellular location is the virion membrane. The protein localises to the host endoplasmic reticulum membrane. The protein resides in the host Golgi apparatus membrane. It localises to the host cell membrane. In terms of biological role, class I viral fusion protein that directs fusion of viral and host endosomal membranes, leading to delivery of the nucleocapsid into the cytoplasm. Membrane fusion is mediated by irreversible conformational changes induced upon acidification in the endosome. Its function is as follows. Stable signal peptide (SSP): cleaved and functions as a signal peptide. In addition, it is also retained as the third component of the GP complex. The SSP is required for efficient glycoprotein expression, post-translational maturation cleavage of GP1 and GP2, glycoprotein transport to the cell surface plasma membrane, formation of infectious virus particles, and acid pH-dependent glycoprotein-mediated cell fusion. Functionally, interacts with the host receptor. In Artibeus (neotropical fruit bats), this protein is Pre-glycoprotein polyprotein GP complex.